The primary structure comprises 38 residues: Large ribosomal subunit protein bL36 (38 aa).

Belongs to the bacterial ribosomal protein bL36 family.

In Sorangium cellulosum (strain So ce56) (Polyangium cellulosum (strain So ce56)), this protein is Large ribosomal subunit protein bL36.